A 499-amino-acid polypeptide reads, in one-letter code: Glutamyl-tRNA(Gln) amidotransferase subunit A (499 aa).

Active-site charge relay system residues include lysine 80 and serine 155. Serine 179 functions as the Acyl-ester intermediate in the catalytic mechanism.

This sequence belongs to the amidase family. GatA subfamily. Heterotrimer of A, B and C subunits.

It catalyses the reaction L-glutamyl-tRNA(Gln) + L-glutamine + ATP + H2O = L-glutaminyl-tRNA(Gln) + L-glutamate + ADP + phosphate + H(+). Its function is as follows. Allows the formation of correctly charged Gln-tRNA(Gln) through the transamidation of misacylated Glu-tRNA(Gln) in organisms which lack glutaminyl-tRNA synthetase. The reaction takes place in the presence of glutamine and ATP through an activated gamma-phospho-Glu-tRNA(Gln). This is Glutamyl-tRNA(Gln) amidotransferase subunit A from Cupriavidus metallidurans (strain ATCC 43123 / DSM 2839 / NBRC 102507 / CH34) (Ralstonia metallidurans).